The sequence spans 383 residues: S-adenosylmethionine synthase (383 aa).

Position 15 (H15) interacts with ATP. Position 17 (D17) interacts with Mg(2+). Position 43 (E43) interacts with K(+). L-methionine contacts are provided by E56 and Q99. Positions Q99–R109 are flexible loop. ATP is bound by residues D164–K166, R230–F231, D239, R245–K246, A262, and K266. D239 is an L-methionine binding site. K270 lines the L-methionine pocket.

Belongs to the AdoMet synthase family. Homotetramer; dimer of dimers. It depends on Mg(2+) as a cofactor. Requires K(+) as cofactor.

The protein resides in the cytoplasm. The enzyme catalyses L-methionine + ATP + H2O = S-adenosyl-L-methionine + phosphate + diphosphate. The protein operates within amino-acid biosynthesis; S-adenosyl-L-methionine biosynthesis; S-adenosyl-L-methionine from L-methionine: step 1/1. Catalyzes the formation of S-adenosylmethionine (AdoMet) from methionine and ATP. The overall synthetic reaction is composed of two sequential steps, AdoMet formation and the subsequent tripolyphosphate hydrolysis which occurs prior to release of AdoMet from the enzyme. The polypeptide is S-adenosylmethionine synthase (Pectobacterium carotovorum subsp. carotovorum (strain PC1)).